We begin with the raw amino-acid sequence, 378 residues long: Stimulator of interferon genes protein (378 aa).

The Cytoplasmic portion of the chain corresponds to 1–17; it reads MPYSSLHPSIPQPRGLR. Residues 1-190 are mediates interaction with ZDHHC1 and ZDHHC11; it reads MPYSSLHPSI…AYNQRHKNVL (190 aa). A helical transmembrane segment spans residues 18–34; sequence AQVAALVLLGACLVALW. Topologically, residues 35-44 are lumenal; it reads GLGELPEYTL. Residues 45–69 form a helical membrane-spanning segment; that stretch reads RWLVLHLASQQIGLLVKGLCSLAEE. Residues 70-91 are Cytoplasmic-facing; the sequence is LCHVHSRYQSSYWRAARACLGC. S-palmitoyl cysteine attachment occurs at residues Cys-88 and Cys-91. Residues 92–106 form a helical membrane-spanning segment; sequence PIRCGALLLLSCYFY. The Lumenal portion of the chain corresponds to 107–116; sequence FSIRDKAGLP. Residues 117-134 traverse the membrane as a helical segment; that stretch reads LPWMLALLGLSQALNILL. Residues 135–378 are Cytoplasmic-facing; the sequence is GLQHLAPAEV…QPLPLRSDIF (244 aa). Lys-150 participates in a covalent cross-link: Glycyl lysine isopeptide (Lys-Gly) (interchain with G-Cter in ubiquitin). The segment at 153–339 is cyclic dinucleotide-binding domain (CBD); it reads FNVAHGLAWS…LRHLRQEERE (187 aa). The 2',3'-cGAMP site is built by Ser-162 and Tyr-167. 3',3'-c-di-GMP is bound by residues Ser-162 and Tyr-167. Tyr-167 is a binding site for 2',3'-cUAMP. Lys-236 participates in a covalent cross-link: Glycyl lysine isopeptide (Lys-Gly) (interchain with G-Cter in ubiquitin). Arg-238 and Thr-263 together coordinate 2',3'-cGAMP. Residues Arg-238 and Thr-263 each contribute to the 2',3'-cUAMP site. Residues 238-241 and Thr-263 each bind 3',3'-c-di-GMP; that span reads RVYT. The tract at residues 339-378 is C-terminal tail (CTT); it reads EVTMGSAETSVVPTSSTLSQEPELLISGMEQPLPLRSDIF. Ser-354 is modified (phosphoserine). Residue Thr-355 is modified to Phosphothreonine. A phosphoserine; by TBK1 mark is found at Ser-357 and Ser-365. A pLxIS motif motif is present at residues 362–365; it reads LLIS.

This sequence belongs to the STING family. As to quaternary structure, homodimer; forms a homodimer in absence of cyclic nucleotide (c-di-GMP or cGAMP); 'Lys-63'-linked ubiquitination at Lys-150 is required for homodimerization. Homotetramer; in presence of cyclic nucleotide (c-di-GMP or cGAMP), forms tetramers and higher-order oligomers through side-by-side packing. Interacts (when phosphorylated) with IRF3; following activation and phosphorylation on the pLxIS motif by TBK1, recruits IRF3. Interacts with DDX58/RIG-I, MAVS and SSR2. Interacts with RNF5 and TRIM56. Interacts with TBK1; when homodimer, leading to subsequent production of IFN-beta. Interacts with IFIT1 and IFIT2. Interacts with TRIM29; this interaction induces STING1 ubiquitination and subsequent degradation. Associates with the MHC-II complex. Interacts with STEEP1; interaction takes place upon cGAMP-activation and STING1 phosphorylation by MAP3K7/TAK1 and promotes STING1 translocation to COPII vesicles. Interacts with SEC24A, SEC24B and SEC24C; promoting translocation to COPII vesicles. Interacts (when ubiquitinated) with SQSTM1; leading to relocalization to autophagosomes. Interacts with SURF4. Interacts with HNRNPA2B1. Interacts with ZDHHC1; ZDHHC1 constitutively interacts with STING1 and in presence of DNA viruses activates it by promoting its cGAMP-induced oligomerization and the recruitment of downstream signaling components. Interacts with ZDHHC11; in presence of DNA viruses promotes the recruitment of IRF3 to STING1. Interacts with TOMM70. Interacts with TAB1; promoting recruitment of TAB1 to the endoplasmic reticulum membrane and subsequent activation of MAP3K7/TAK1. Interacts (via transmembrane domain) with TMEM203. Interacts with DDX41. In terms of assembly, (Microbial infection) Interacts with African swine fever virus/ASFV protein A528R; this interaction mediates STING1 degradation. (Microbial infection) Interacts with African swine fever virus/ASFV minor capsid protein p17. As to quaternary structure, (Microbial infection) Interacts with Pseudorabies virus protein UL13; this interaction mediates STING1 degradation in a RNF5-dependent manner. In terms of processing, phosphorylation by TBK1 leads to activation and production of IFN-beta. Following cyclic nucleotide (c-di-GMP or cGAMP)-binding, activation and translocation from the endoplasmic reticulum, STING1 is phosphorylated by TBK1 at Ser-365 in the pLxIS motif. The phosphorylated pLxIS motif constitutes an IRF3-binding motif, leading to recruitment of the transcription factor IRF3 to induce type-I interferons and other cytokines. Phosphorylated on tyrosine residues upon MHC-II aggregation. Dephosphorylation by PPP6C leads to inactivation and decreased production of IFN-beta. Phosphorylation at Ser-357 is also required to activate IRF3. Phosphorylation at Ser-354 by MAP3K7/TAK1 facilitates its interaction with STEEP1, promoting STING1 translocation to COPII vesicles. Ubiquitinated. Ubiquitinated via 'Lys-63'-linked ubiquitin chains in response to double-stranded DNA treatment, leading to relocalization to autophagosomes and subsequent degradation; this process is dependent on SQSTM1. 'Lys-63'-linked ubiquitination mediated by TRIM56 at Lys-150 promotes homodimerization and recruitment of the antiviral kinase TBK1 and subsequent production of IFN-beta. 'Lys-48'-linked polyubiquitination at Lys-150 occurring after viral infection is mediated by RNF5 and leads to proteasomal degradation. 'Lys-11'-linked polyubiquitination at Lys-150 by RNF26 leads to stabilize STING1: it protects STING1 from RNF5-mediated 'Lys-48'-linked polyubiquitination. 'Lys-33'-linked and 'Lys-48'-linked deubiquitinated by USP20; leading to its stabilization and promotion of innate antiviral response. 'Lys-48'-linked deubiquitinated by USP44; leading to its stabilization and promotion of innate antiviral response. Deubiquitinated by USP13; leading to inhibition of innate antiviral response. 'Lys-63'-linked deubiquitinated by USP49; leading to inhibition of the subsequent recruitment of TBK1 to the signaling complex. 'Lys-63'-linked ubiquitination mediated by RNF39 promotes the activation of the cGAS-STING pathway. Post-translationally, palmitoylation takes place in the Golgi apparatus and creates a platform for the recruitment of TBK1. In terms of tissue distribution, expressed at higher level in the spleen, lymph node, lung and bone marrow, followed by the small intestine, heart, liver and brain, and to a lesser extent in the stomach and kidney.

The protein resides in the endoplasmic reticulum membrane. It is found in the cytoplasm. It localises to the perinuclear region. The protein localises to the endoplasmic reticulum-Golgi intermediate compartment membrane. Its subcellular location is the golgi apparatus membrane. The protein resides in the cytoplasmic vesicle. It is found in the autophagosome membrane. It localises to the mitochondrion outer membrane. The protein localises to the cell membrane. The catalysed reaction is H(+)(in) = H(+)(out). Facilitator of innate immune signaling that acts as a sensor of cytosolic DNA from bacteria and viruses and promotes the production of type I interferon (IFN-alpha and IFN-beta). Innate immune response is triggered in response to non-CpG double-stranded DNA from viruses and bacteria delivered to the cytoplasm. Acts by binding cyclic dinucleotides: recognizes and binds cyclic di-GMP (c-di-GMP), a second messenger produced by bacteria, cyclic UMP-AMP (2',3'-cUAMP), and cyclic GMP-AMP (cGAMP), a messenger produced by CGAS in response to DNA virus in the cytosol. Upon binding to c-di-GMP, cUAMP or cGAMP, STING1 oligomerizes, translocates from the endoplasmic reticulum and is phosphorylated by TBK1 on the pLxIS motif, leading to recruitment and subsequent activation of the transcription factor IRF3 to induce expression of type I interferon and exert a potent anti-viral state. Exhibits 2',3' phosphodiester linkage-specific ligand recognition: can bind both 2'-3' linked cGAMP (2'-3'-cGAMP) and 3'-3' linked cGAMP but is preferentially activated by 2'-3' linked cGAMP. The preference for 2'-3'-cGAMP, compared to other linkage isomers is probably due to the ligand itself, whichs adopts an organized free-ligand conformation that resembles the STING1-bound conformation and pays low energy costs in changing into the active conformation. In addition to promote the production of type I interferons, plays a direct role in autophagy. Following cGAMP-binding, STING1 buds from the endoplasmic reticulum into COPII vesicles, which then form the endoplasmic reticulum-Golgi intermediate compartment (ERGIC). The ERGIC serves as the membrane source for WIPI2 recruitment and LC3 lipidation, leading to formation of autophagosomes that target cytosolic DNA or DNA viruses for degradation by the lysosome. Promotes autophagy by acting as a proton channel that directs proton efflux from the Golgi to facilitate MAP1LC3B/LC3B lipidation. The autophagy- and interferon-inducing activities can be uncoupled and autophagy induction is independent of TBK1 phosphorylation. Autophagy is also triggered upon infection by bacteria: following c-di-GMP-binding, which is produced by live Gram-positive bacteria, promotes reticulophagy. May be involved in translocon function, the translocon possibly being able to influence the induction of type I interferons. May be involved in transduction of apoptotic signals via its association with the major histocompatibility complex class II (MHC-II). The chain is Stimulator of interferon genes protein from Sus scrofa (Pig).